We begin with the raw amino-acid sequence, 110 residues long: Small ribosomal subunit protein eS25 (110 aa).

The segment at 1–39 is disordered; that stretch reads MPPKAAGGKSKQIQASKAAAKGSSGGAGRKKWSKGRSRE.

The protein belongs to the eukaryotic ribosomal protein eS25 family.

This chain is Small ribosomal subunit protein eS25 (rps25), found in Dictyostelium discoideum (Social amoeba).